Here is a 72-residue protein sequence, read N- to C-terminus: UPF0154 protein BH2350 (72 aa).

Residues 3 to 23 traverse the membrane as a helical segment; that stretch reads WMILLWITLGIVIGIAIGFFI.

The protein belongs to the UPF0154 family.

It localises to the membrane. This Halalkalibacterium halodurans (strain ATCC BAA-125 / DSM 18197 / FERM 7344 / JCM 9153 / C-125) (Bacillus halodurans) protein is UPF0154 protein BH2350.